A 391-amino-acid polypeptide reads, in one-letter code: UPF0229 protein BCB4264_A0587 (391 aa).

Polar residues predominate over residues 1-16 (MGEENQPNYTISQENW). 2 disordered regions span residues 1–31 (MGEE…RHQE) and 80–117 (HVGQ…GDAA). Residues 21–31 (KGYDDQQRHQE) show a composition bias toward basic and acidic residues. Residues 98-115 (GSGGQKQKGPGKGQGAGD) show a composition bias toward gly residues.

The protein belongs to the UPF0229 family.

This chain is UPF0229 protein BCB4264_A0587, found in Bacillus cereus (strain B4264).